A 511-amino-acid polypeptide reads, in one-letter code: MMDLDRIIDQLHIYEKKVLKAFEGSDKPLKPEEIAESQKIDIKSVMSASGALESRGFVRVMKDADEVVSLTEDGESCAREGLPERRLIEALKGEEELEMSELSRRAGLDKKEAGIGIGWLMRKGWGRISQGMVSAVSDETPERGADERLLELLLERGSVRIRELPDELRGALKDLKGRKGIVDIRKIKRHTIELTTEGRKLLERGIEIVEEATQVTHEHLKSGAWRKLHYRGYNIDAEYPLVYPGKMHPLRRIIDEIRSIFLKLGFTESRGPIVESAFWNFDCLFQPQDHAAREMQDTFYVKNPAVTDLPCEDLVRAVQDAHETGGSTGSEGWQYEWDRDVARQSVLRTHTTCVSARFLSENEPPLKMFSVGRVFRRETITYKHLPEFHQVEGIVAGDEVNFRNLLGILREFYRKLGFEVRFRPAYFPYTYLSTECEIYLPEKKSWIELGGAGMFRPEVLEPLGVETPVAAFGLGIERLAMIRFDIKDIRMLYQSDLGWLRGLPVTGDLEL.

L-phenylalanine is bound by residues T352, 390–392 (QVE), Y429, and F455.

It belongs to the class-II aminoacyl-tRNA synthetase family. Phe-tRNA synthetase alpha subunit type 2 subfamily. In terms of assembly, tetramer of two alpha and two beta subunits. The cofactor is Mg(2+).

Its subcellular location is the cytoplasm. The catalysed reaction is tRNA(Phe) + L-phenylalanine + ATP = L-phenylalanyl-tRNA(Phe) + AMP + diphosphate + H(+). The protein is Phenylalanine--tRNA ligase alpha subunit of Methanothermobacter thermautotrophicus (strain ATCC 29096 / DSM 1053 / JCM 10044 / NBRC 100330 / Delta H) (Methanobacterium thermoautotrophicum).